Reading from the N-terminus, the 430-residue chain is Trigger factor (430 aa).

In terms of domain architecture, PPIase FKBP-type spans 163 to 248 (GNIAIIDFKG…IKDIKVKELP (86 aa)).

This sequence belongs to the FKBP-type PPIase family. Tig subfamily.

Its subcellular location is the cytoplasm. The catalysed reaction is [protein]-peptidylproline (omega=180) = [protein]-peptidylproline (omega=0). Functionally, involved in protein export. Acts as a chaperone by maintaining the newly synthesized protein in an open conformation. Functions as a peptidyl-prolyl cis-trans isomerase. This is Trigger factor from Clostridium botulinum (strain Langeland / NCTC 10281 / Type F).